A 243-amino-acid polypeptide reads, in one-letter code: Tryptophan synthase alpha chain (243 aa).

Active-site proton acceptor residues include E31 and D42.

This sequence belongs to the TrpA family. In terms of assembly, tetramer of two alpha and two beta chains.

The enzyme catalyses (1S,2R)-1-C-(indol-3-yl)glycerol 3-phosphate + L-serine = D-glyceraldehyde 3-phosphate + L-tryptophan + H2O. Its pathway is amino-acid biosynthesis; L-tryptophan biosynthesis; L-tryptophan from chorismate: step 5/5. Functionally, the alpha subunit is responsible for the aldol cleavage of indoleglycerol phosphate to indole and glyceraldehyde 3-phosphate. The protein is Tryptophan synthase alpha chain of Staphylococcus haemolyticus (strain JCSC1435).